Consider the following 264-residue polypeptide: Thymidylate synthase (264 aa).

Arg21 contributes to the dUMP binding site. His51 is a binding site for (6R)-5,10-methylene-5,6,7,8-tetrahydrofolate. A dUMP-binding site is contributed by 126-127 (RR). The active-site Nucleophile is the Cys146. Residues 166–169 (RSCD), Asn177, and 207–209 (HLY) contribute to the dUMP site. Residue Asp169 participates in (6R)-5,10-methylene-5,6,7,8-tetrahydrofolate binding. Ala263 contributes to the (6R)-5,10-methylene-5,6,7,8-tetrahydrofolate binding site.

It belongs to the thymidylate synthase family. Bacterial-type ThyA subfamily. Homodimer.

It is found in the cytoplasm. It catalyses the reaction dUMP + (6R)-5,10-methylene-5,6,7,8-tetrahydrofolate = 7,8-dihydrofolate + dTMP. Its pathway is pyrimidine metabolism; dTTP biosynthesis. Its function is as follows. Catalyzes the reductive methylation of 2'-deoxyuridine-5'-monophosphate (dUMP) to 2'-deoxythymidine-5'-monophosphate (dTMP) while utilizing 5,10-methylenetetrahydrofolate (mTHF) as the methyl donor and reductant in the reaction, yielding dihydrofolate (DHF) as a by-product. This enzymatic reaction provides an intracellular de novo source of dTMP, an essential precursor for DNA biosynthesis. This is Thymidylate synthase from Escherichia coli O9:H4 (strain HS).